Consider the following 442-residue polypeptide: tRNA modification GTPase MnmE (442 aa).

Arg21, Glu79, and Lys118 together coordinate (6S)-5-formyl-5,6,7,8-tetrahydrofolate. The TrmE-type G domain occupies 214-367; it reads GFKIAIVGKP…LKEELQNYLN (154 aa). A K(+)-binding site is contributed by Asn224. Residues 224-229, 243-249, and 268-271 each bind GTP; these read NVGKSS, SDIAGTT, and DTAG. Ser228 lines the Mg(2+) pocket. K(+)-binding residues include Ser243, Ile245, and Thr248. Residue Thr249 participates in Mg(2+) binding. Lys442 serves as a coordination point for (6S)-5-formyl-5,6,7,8-tetrahydrofolate.

The protein belongs to the TRAFAC class TrmE-Era-EngA-EngB-Septin-like GTPase superfamily. TrmE GTPase family. Homodimer. Heterotetramer of two MnmE and two MnmG subunits. K(+) serves as cofactor.

Its subcellular location is the cytoplasm. Functionally, exhibits a very high intrinsic GTPase hydrolysis rate. Involved in the addition of a carboxymethylaminomethyl (cmnm) group at the wobble position (U34) of certain tRNAs, forming tRNA-cmnm(5)s(2)U34. This is tRNA modification GTPase MnmE from Campylobacter jejuni (strain RM1221).